The chain runs to 553 residues: Undecaprenyl phosphate-alpha-4-amino-4-deoxy-L-arabinose arabinosyl transferase (553 aa).

The next 12 membrane-spanning stretches (helical) occupy residues 8–28, 81–101, 113–133, 136–156, 176–196, 204–224, 255–275, 289–309, 313–333, 351–371, 384–404, and 412–432; these read LLFSLFYALYYLIPLELRALW, FAVRIGSVFSITLSALLVYWL, LLSAVVFLTCLLVYGVGSYAV, PMVTLWLVAAMCSFWLAAQSA, LMTKGFLALAVPVVAIVPWMI, LLLFGPLALVSAALITAPWAI, APFWYYLPMLLAGALPWVGLL, NSGSLYLLCWTVMPLLFFSLA, LPTYILPCFAPLAILLAHHGI, VAFGVIAALAVILVLAPWGLV, VLLGASAFLFWAAVGLACLVA, and AALCPLGLALLAGAVIPDKVI.

This sequence belongs to the glycosyltransferase 83 family.

It is found in the cell inner membrane. The enzyme catalyses 4-amino-4-deoxy-alpha-L-arabinopyranosyl di-trans,octa-cis-undecaprenyl phosphate + lipid IVA = lipid IIA + di-trans,octa-cis-undecaprenyl phosphate.. It participates in lipopolysaccharide metabolism; 4-amino-4-deoxy-beta-L-arabinose-lipid A biosynthesis. Catalyzes the transfer of the L-Ara4N moiety of the glycolipid undecaprenyl phosphate-alpha-L-Ara4N to lipid A. The modified arabinose is attached to lipid A and is required for resistance to polymyxin and cationic antimicrobial peptides. The chain is Undecaprenyl phosphate-alpha-4-amino-4-deoxy-L-arabinose arabinosyl transferase from Erwinia tasmaniensis (strain DSM 17950 / CFBP 7177 / CIP 109463 / NCPPB 4357 / Et1/99).